The sequence spans 368 residues: Branched-chain-amino-acid aminotransferase (368 aa).

Residue R101 participates in pyridoxal 5'-phosphate binding. N6-(pyridoxal phosphate)lysine is present on K204. Pyridoxal 5'-phosphate-binding positions include Y209, 271–272, and T314; that span reads IT.

The protein belongs to the class-IV pyridoxal-phosphate-dependent aminotransferase family. Homodimer. The cofactor is pyridoxal 5'-phosphate.

It carries out the reaction L-leucine + 2-oxoglutarate = 4-methyl-2-oxopentanoate + L-glutamate. The enzyme catalyses L-isoleucine + 2-oxoglutarate = (S)-3-methyl-2-oxopentanoate + L-glutamate. The catalysed reaction is L-valine + 2-oxoglutarate = 3-methyl-2-oxobutanoate + L-glutamate. Its pathway is amino-acid biosynthesis; L-isoleucine biosynthesis; L-isoleucine from 2-oxobutanoate: step 4/4. The protein operates within amino-acid biosynthesis; L-leucine biosynthesis; L-leucine from 3-methyl-2-oxobutanoate: step 4/4. It functions in the pathway amino-acid biosynthesis; L-valine biosynthesis; L-valine from pyruvate: step 4/4. Catalyzes the reversible transfers of an amino group from glutamate to the alpha-ketoacid of the respective amino acid in the final step in the biosynthesis of branchedchain amino acids. This is Branched-chain-amino-acid aminotransferase (ilvE) from Mycobacterium tuberculosis (strain CDC 1551 / Oshkosh).